A 120-amino-acid chain; its full sequence is Small ribosomal subunit protein bS16 (120 aa).

Residues 81–120 are disordered; the sequence is GLAKRPARNNPQKAEPGEKSKERAAKRAEKAAAPAEDAAA. Basic and acidic residues predominate over residues 95–110; it reads EPGEKSKERAAKRAEK. A compositionally biased stretch (low complexity) spans 111-120; the sequence is AAAPAEDAAA.

It belongs to the bacterial ribosomal protein bS16 family.

The sequence is that of Small ribosomal subunit protein bS16 from Methylorubrum populi (strain ATCC BAA-705 / NCIMB 13946 / BJ001) (Methylobacterium populi).